Here is a 688-residue protein sequence, read N- to C-terminus: MSKDFLLEIGLEEMPAQYVTSSVAQLEKRVSDWLNENQITFEKIKTYSTPRRLTVLVEAMAEEQANRVEEAKGPAKKIALDDEGNWSKAALGFARSQKVEPADLTFREIKGVEYIYIKKEVIGEKTTALLPSLEKVVTSMTFPVSMHWGSNDLRYIRPIKWLIAMFGEEIIPFEITGVSTSNTSRGHRFLGKTATIKQPSDYPNALLEQFVVVNAEERKQAIVEQLRELESMENWQIKEDEDLLEEVTNLVEYPTVLAGNFEKEYLELPEEVLITTMKEHQRYFPVFSKDEELLPHFVTVRNGNHENLDTVARGNEKVLRARLSDADFFYQEDLKITIDEAVAKLQNIVFHEKLGTLTEKMKRVQKVALMLADYLDWQEEDKQDIIRLTNIYKFDLVTNIVGEFPELQGLMGEKYALLQGEKPAIAIAIREHYLPSSAEGALPQTDLGSIIAIADKLETLVGFFCVNIVPTGSADPFGLRRSAFGAMRIIQANGWDIPVLELLSRIVDMERAEGAVELPSDDVKKEVQTFLKNRLRVVLQNHHIRHDIIDAVIGGDPNTIPQLVDRAQILNKHVESDWFRPTVEALTRVMNISKKHEGNVEVDPSLFENKYEQALFDEIEKLKYDYANLTIVDRLRAFAALRTTIDDYFDNTLVMSENIELKNNRLALLFELASFIKEFAQMDEINVK.

The protein belongs to the class-II aminoacyl-tRNA synthetase family. Tetramer of two alpha and two beta subunits.

The protein localises to the cytoplasm. It carries out the reaction tRNA(Gly) + glycine + ATP = glycyl-tRNA(Gly) + AMP + diphosphate. The chain is Glycine--tRNA ligase beta subunit from Listeria welshimeri serovar 6b (strain ATCC 35897 / DSM 20650 / CCUG 15529 / CIP 8149 / NCTC 11857 / SLCC 5334 / V8).